A 472-amino-acid chain; its full sequence is MTRRGKIVCTLGPATQRDDLVRALVEAGMDVARMNFSHGDYDDHKVAYERVRVASDATGRAVGVLADLQGPKIRLGRFASGATHWAEGETVRITVGACEGSHDRVSTTYKRLAQDAVAGDRVLVDDGKVALVVDAVEGDDVVCTVVEGGPVSDNKGISLPGMNVTAPALSEKDIEDLTFALNLGVDMVALSFVRSPADVELVHEVMDRIGRRVPVIAKLEKPEAIDNLEAIVLAFDAVMVARGDLGVELPLEEVPLVQKRAIQMARENAKPVIVATQMLDSMIENSRPTRAEASDVANAVLDGADALMLSGETSVGKYPLAAVRTMSRIICAVEENSTAAPPLTHIPRTKRGVISYAARDIGERLDAKALVAFTQSGDTVRRLARLHTPLPLLAFTAWPEVRSQLAMTWGTETFIVPKMQSTDGMIRQVDKSLLELARYKRGDLVVIVAGAPPGTVGSTNLIHVHRIGEDDV.

Arg-33 contacts substrate. Residues Asn-35, Ser-37, and Asp-67 each coordinate K(+). 35–38 (NFSH) lines the ATP pocket. The ATP site is built by Arg-74 and Lys-155. Glu-220 is a binding site for Mg(2+). Gly-243, Asp-244, and Thr-276 together coordinate substrate. Asp-244 lines the Mg(2+) pocket.

This sequence belongs to the pyruvate kinase family. Homotetramer. Requires Mg(2+) as cofactor. The cofactor is K(+).

The enzyme catalyses pyruvate + ATP = phosphoenolpyruvate + ADP + H(+). The protein operates within carbohydrate degradation; glycolysis; pyruvate from D-glyceraldehyde 3-phosphate: step 5/5. This chain is Pyruvate kinase (pyk), found in Mycobacterium tuberculosis (strain CDC 1551 / Oshkosh).